The chain runs to 126 residues: Aspartate 1-decarboxylase (126 aa).

Catalysis depends on Ser25, which acts as the Schiff-base intermediate with substrate; via pyruvic acid. A Pyruvic acid (Ser) modification is found at Ser25. Residue Thr57 participates in substrate binding. The active-site Proton donor is Tyr58. A substrate-binding site is contributed by 73–75; it reads GAA.

This sequence belongs to the PanD family. As to quaternary structure, heterooctamer of four alpha and four beta subunits. Pyruvate is required as a cofactor. Is synthesized initially as an inactive proenzyme, which is activated by self-cleavage at a specific serine bond to produce a beta-subunit with a hydroxyl group at its C-terminus and an alpha-subunit with a pyruvoyl group at its N-terminus.

It localises to the cytoplasm. It catalyses the reaction L-aspartate + H(+) = beta-alanine + CO2. It participates in cofactor biosynthesis; (R)-pantothenate biosynthesis; beta-alanine from L-aspartate: step 1/1. Its function is as follows. Catalyzes the pyruvoyl-dependent decarboxylation of aspartate to produce beta-alanine. This is Aspartate 1-decarboxylase from Saccharophagus degradans (strain 2-40 / ATCC 43961 / DSM 17024).